Here is a 483-residue protein sequence, read N- to C-terminus: Glycogen synthase (483 aa).

Lysine 15 provides a ligand contact to ADP-alpha-D-glucose.

This sequence belongs to the glycosyltransferase 1 family. Bacterial/plant glycogen synthase subfamily.

The enzyme catalyses [(1-&gt;4)-alpha-D-glucosyl](n) + ADP-alpha-D-glucose = [(1-&gt;4)-alpha-D-glucosyl](n+1) + ADP + H(+). It functions in the pathway glycan biosynthesis; glycogen biosynthesis. Functionally, synthesizes alpha-1,4-glucan chains using ADP-glucose. The protein is Glycogen synthase of Petrotoga mobilis (strain DSM 10674 / SJ95).